We begin with the raw amino-acid sequence, 333 residues long: Cell shape-determining protein Mbl (333 aa).

ATP contacts are provided by residues 12–14 (TAN), 156–158 (GGT), 204–207 (EDIK), and 284–287 (GGAL).

Belongs to the FtsA/MreB family. As to quaternary structure, forms polymers.

The protein resides in the cytoplasm. Its function is as follows. Forms membrane-associated dynamic filaments that are essential for cell shape determination. Acts by regulating cell wall synthesis and cell elongation, and thus cell shape. A feedback loop between cell geometry and Mbl localization may maintain elongated cell shape by targeting cell wall growth to regions of negative cell wall curvature. This is Cell shape-determining protein Mbl from Bacillus cereus (strain ATCC 10987 / NRS 248).